A 921-amino-acid polypeptide reads, in one-letter code: Ribosome-releasing factor 2, mitochondrial (921 aa).

The transit peptide at 1–55 directs the protein to the mitochondrion; sequence MVSALLLRARQNGRAARCLDYPKVKCWALASLPKSSLEKPGFSQVRRFSVFHPQS. Residues 60-368 form the tr-type G domain; sequence DLTRNIGIIA…SVVDLLPSPQ (309 aa). Residues 69–76, 152–156, and 206–209 each bind GTP; these read AHIDAGKT, DTPGH, and NKMD.

The protein belongs to the TRAFAC class translation factor GTPase superfamily. Classic translation factor GTPase family. EF-G/EF-2 subfamily.

The protein localises to the mitochondrion. Functionally, mitochondrial GTPase that mediates the disassembly of ribosomes from messenger RNA at the termination of mitochondrial protein biosynthesis. Not involved in the GTP-dependent ribosomal translocation step during translation elongation. The sequence is that of Ribosome-releasing factor 2, mitochondrial (mef2) from Emericella nidulans (strain FGSC A4 / ATCC 38163 / CBS 112.46 / NRRL 194 / M139) (Aspergillus nidulans).